Reading from the N-terminus, the 427-residue chain is Serine--tRNA ligase (427 aa).

236–238 (TAE) is an L-serine binding site. 267-269 (RRE) contributes to the ATP binding site. Glutamate 290 contacts L-serine. ATP is bound at residue 354-357 (EISS). Serine 390 is a binding site for L-serine.

This sequence belongs to the class-II aminoacyl-tRNA synthetase family. Type-1 seryl-tRNA synthetase subfamily. As to quaternary structure, homodimer. The tRNA molecule binds across the dimer.

The protein localises to the cytoplasm. It catalyses the reaction tRNA(Ser) + L-serine + ATP = L-seryl-tRNA(Ser) + AMP + diphosphate + H(+). The enzyme catalyses tRNA(Sec) + L-serine + ATP = L-seryl-tRNA(Sec) + AMP + diphosphate + H(+). It participates in aminoacyl-tRNA biosynthesis; selenocysteinyl-tRNA(Sec) biosynthesis; L-seryl-tRNA(Sec) from L-serine and tRNA(Sec): step 1/1. Catalyzes the attachment of serine to tRNA(Ser). Is also able to aminoacylate tRNA(Sec) with serine, to form the misacylated tRNA L-seryl-tRNA(Sec), which will be further converted into selenocysteinyl-tRNA(Sec). The polypeptide is Serine--tRNA ligase (Rippkaea orientalis (strain PCC 8801 / RF-1) (Cyanothece sp. (strain PCC 8801))).